Reading from the N-terminus, the 199-residue chain is NAD(P)H dehydrogenase (quinone) (199 aa).

One can recognise a Flavodoxin-like domain in the interval 4-190 (VLVLYYSAYG…DGARFQGKRV (187 aa)). FMN-binding positions include 10-15 (SAYGHM) and 78-80 (TRY). Tyr12 contributes to the NAD(+) binding site. Substrate is bound at residue Trp98. FMN contacts are provided by residues 113–119 (STATQHG) and His134. The tract at residues 157 to 185 (GGAPYGMTTTADGDGSRQPSEQELDGARF) is disordered. Over residues 163-177 (MTTTADGDGSRQPSE) the composition is skewed to polar residues.

The protein belongs to the WrbA family. Requires FMN as cofactor.

The enzyme catalyses a quinone + NADH + H(+) = a quinol + NAD(+). It catalyses the reaction a quinone + NADPH + H(+) = a quinol + NADP(+). This Brucella anthropi (strain ATCC 49188 / DSM 6882 / CCUG 24695 / JCM 21032 / LMG 3331 / NBRC 15819 / NCTC 12168 / Alc 37) (Ochrobactrum anthropi) protein is NAD(P)H dehydrogenase (quinone).